A 437-amino-acid chain; its full sequence is GTPase Obg (437 aa).

The 159-residue stretch at 2–160 (SMFLDTAKIS…RQLELELKIL (159 aa)) folds into the Obg domain. The OBG-type G domain occupies 161 to 338 (ADVGLVGFPS…LLEATAELLA (178 aa)). GTP-binding positions include 167–174 (GFPSVGKS), 192–196 (FTTIV), 214–217 (DLPG), 284–287 (NKMD), and 319–321 (SSL). Mg(2+) contacts are provided by serine 174 and threonine 194. The region spanning 359-437 (GFAEAEKEFE…IGKFEFEFVD (79 aa)) is the OCT domain.

The protein belongs to the TRAFAC class OBG-HflX-like GTPase superfamily. OBG GTPase family. Monomer. It depends on Mg(2+) as a cofactor.

Its subcellular location is the cytoplasm. Its function is as follows. An essential GTPase which binds GTP, GDP and possibly (p)ppGpp with moderate affinity, with high nucleotide exchange rates and a fairly low GTP hydrolysis rate. Plays a role in control of the cell cycle, stress response, ribosome biogenesis and in those bacteria that undergo differentiation, in morphogenesis control. This is GTPase Obg from Streptococcus pyogenes serotype M28 (strain MGAS6180).